A 197-amino-acid chain; its full sequence is Phosphoheptose isomerase (197 aa).

The SIS domain occupies 34-196; that stretch reads MVQCLLGGNK…DRTLFPQDEQ (163 aa). 49–51 is a binding site for substrate; sequence NGG. Residues H58 and E62 each contribute to the Zn(2+) site. Residues E62, 91 to 92, 117 to 119, S122, and Q172 each bind substrate; these read ND and STS. Residues Q172 and H180 each contribute to the Zn(2+) site.

It belongs to the SIS family. GmhA subfamily. As to quaternary structure, homotetramer. Zn(2+) is required as a cofactor.

The protein resides in the cytoplasm. The enzyme catalyses 2 D-sedoheptulose 7-phosphate = D-glycero-alpha-D-manno-heptose 7-phosphate + D-glycero-beta-D-manno-heptose 7-phosphate. It participates in carbohydrate biosynthesis; D-glycero-D-manno-heptose 7-phosphate biosynthesis; D-glycero-alpha-D-manno-heptose 7-phosphate and D-glycero-beta-D-manno-heptose 7-phosphate from sedoheptulose 7-phosphate: step 1/1. In terms of biological role, catalyzes the isomerization of sedoheptulose 7-phosphate in D-glycero-D-manno-heptose 7-phosphate. The protein is Phosphoheptose isomerase of Shewanella oneidensis (strain ATCC 700550 / JCM 31522 / CIP 106686 / LMG 19005 / NCIMB 14063 / MR-1).